The following is a 487-amino-acid chain: Inosine-5'-monophosphate dehydrogenase (487 aa).

CBS domains lie at 93–152 (VVTE…VTAV) and 153–214 (MTPK…CKDE). Residues Asp248, 248–250 (DSS), and 298–300 (GIG) each bind NAD(+). The K(+) site is built by Gly300 and Gly302. Residue Ser303 participates in IMP binding. K(+) is bound at residue Cys305. Cys305 serves as the catalytic Thioimidate intermediate. IMP contacts are provided by residues 338 to 340 (DGG), 361 to 362 (GS), and 385 to 389 (YRGMG). Catalysis depends on Arg401, which acts as the Proton acceptor. Position 415 (Glu415) interacts with IMP. Residues Glu469, Ser470, and His471 each contribute to the K(+) site.

This sequence belongs to the IMPDH/GMPR family. As to quaternary structure, homotetramer. K(+) serves as cofactor.

It catalyses the reaction IMP + NAD(+) + H2O = XMP + NADH + H(+). It participates in purine metabolism; XMP biosynthesis via de novo pathway; XMP from IMP: step 1/1. Its activity is regulated as follows. Mycophenolic acid (MPA) is a non-competitive inhibitor that prevents formation of the closed enzyme conformation by binding to the same site as the amobile flap. In contrast, mizoribine monophosphate (MZP) is a competitive inhibitor that induces the closed conformation. MPA is a potent inhibitor of mammalian IMPDHs but a poor inhibitor of the bacterial enzymes. MZP is a more potent inhibitor of bacterial IMPDH. Catalyzes the conversion of inosine 5'-phosphate (IMP) to xanthosine 5'-phosphate (XMP), the first committed and rate-limiting step in the de novo synthesis of guanine nucleotides, and therefore plays an important role in the regulation of cell growth. The sequence is that of Inosine-5'-monophosphate dehydrogenase from Yersinia pestis.